The chain runs to 188 residues: Peptide deformylase (188 aa).

Residues Cys-94 and His-136 each coordinate Fe cation. Residue Glu-137 is part of the active site. His-140 contacts Fe cation.

It belongs to the polypeptide deformylase family. It depends on Fe(2+) as a cofactor.

It catalyses the reaction N-terminal N-formyl-L-methionyl-[peptide] + H2O = N-terminal L-methionyl-[peptide] + formate. Removes the formyl group from the N-terminal Met of newly synthesized proteins. Requires at least a dipeptide for an efficient rate of reaction. N-terminal L-methionine is a prerequisite for activity but the enzyme has broad specificity at other positions. This chain is Peptide deformylase, found in Pelodictyon phaeoclathratiforme (strain DSM 5477 / BU-1).